Reading from the N-terminus, the 159-residue chain is Ribosomal RNA large subunit methyltransferase H (159 aa).

Residues L76, G108, and 127–132 (FGRLTY) each bind S-adenosyl-L-methionine.

This sequence belongs to the RNA methyltransferase RlmH family. In terms of assembly, homodimer.

Its subcellular location is the cytoplasm. The catalysed reaction is pseudouridine(1915) in 23S rRNA + S-adenosyl-L-methionine = N(3)-methylpseudouridine(1915) in 23S rRNA + S-adenosyl-L-homocysteine + H(+). In terms of biological role, specifically methylates the pseudouridine at position 1915 (m3Psi1915) in 23S rRNA. The sequence is that of Ribosomal RNA large subunit methyltransferase H from Enterococcus faecalis (strain ATCC 700802 / V583).